The primary structure comprises 1380 residues: DNA-directed RNA polymerase subunit beta (1380 aa).

This sequence belongs to the RNA polymerase beta chain family. In terms of assembly, the RNAP catalytic core consists of 2 alpha, 1 beta, 1 beta' and 1 omega subunit. When a sigma factor is associated with the core the holoenzyme is formed, which can initiate transcription.

It carries out the reaction RNA(n) + a ribonucleoside 5'-triphosphate = RNA(n+1) + diphosphate. DNA-dependent RNA polymerase catalyzes the transcription of DNA into RNA using the four ribonucleoside triphosphates as substrates. The chain is DNA-directed RNA polymerase subunit beta from Sinorhizobium fredii (strain NBRC 101917 / NGR234).